We begin with the raw amino-acid sequence, 499 residues long: Dual specificity protein kinase CLK2 (499 aa).

Positions 1-67 are disordered; the sequence is MPHPRRYHSS…SYDDRSSDRR (67 aa). Residues 8-21 are compositionally biased toward basic and acidic residues; sequence HSSERGSRGSYREH. The span at 22 to 33 shows a compositional bias: basic residues; the sequence is YRSRKHKRRRSR. Position 34 is a phosphoserine; by PKB/AKT1 (serine 34). A compositionally biased stretch (basic and acidic residues) spans 47 to 67; that stretch reads REDSYHVRSRSSYDDRSSDRR. Serine 98 is subject to Phosphoserine. Tyrosine 99 carries the phosphotyrosine; by autocatalysis modification. Residues 101–143 form a disordered region; the sequence is YQRENSSYRSQRSSRRKHRRRRRRSRTFSRSSSQHSSRRAKSV. A compositionally biased stretch (basic residues) spans 112 to 127; the sequence is RSSRRKHRRRRRRSRT. Residue threonine 127 is modified to Phosphothreonine; by PKB/AKT1. The residue at position 142 (serine 142) is a Phosphoserine; by autocatalysis. Residue tyrosine 153 is modified to Phosphotyrosine. Residues 163–479 enclose the Protein kinase domain; sequence YEIVSTLGEG…LGEALQHPFF (317 aa). ATP contacts are provided by residues 169-177 and lysine 193; that span reads LGEGTFGRV. Aspartate 290 acts as the Proton acceptor in catalysis. Threonine 344 is modified (phosphothreonine; by PKB/AKT2).

It belongs to the protein kinase superfamily. CMGC Ser/Thr protein kinase family. Lammer subfamily. In terms of assembly, interacts with RBMX. Interacts with AKT1 and UBL5. Post-translationally, autophosphorylates on all three types of residues. Phosphorylation on Ser-34 and Thr-127 by AKT1 is induced by ionizing radiation or insulin. Phosphorylation plays a critical role in cell proliferation following low dose radiation and prevents cell death following high dose radiation. Phosphorylation at Thr-344 by PKB/AKT2 induces its kinase activity which is required for its stability. The phosphorylation status at Ser-142 influences its subnuclear localization; inhibition of phosphorylation at Ser-142 results in accumulation in the nuclear speckle. In terms of tissue distribution, endothelial cells. Expressed in androgen-dependent prostate cancer cells.

It is found in the nucleus. The protein resides in the nucleus speckle. It carries out the reaction L-seryl-[protein] + ATP = O-phospho-L-seryl-[protein] + ADP + H(+). The enzyme catalyses L-threonyl-[protein] + ATP = O-phospho-L-threonyl-[protein] + ADP + H(+). The catalysed reaction is L-tyrosyl-[protein] + ATP = O-phospho-L-tyrosyl-[protein] + ADP + H(+). 5,6-dichloro-1-b-D-ribofuranosylbenzimidazole (DRB) inhibits autophosphorylation. TG003 inhibits its kinase activity and affects the regulation of alternative splicing mediated by phosphorylation of SR proteins. Functionally, dual specificity kinase acting on both serine/threonine and tyrosine-containing substrates. Phosphorylates serine- and arginine-rich (SR) proteins of the spliceosomal complex. May be a constituent of a network of regulatory mechanisms that enable SR proteins to control RNA splicing and can cause redistribution of SR proteins from speckles to a diffuse nucleoplasmic distribution. Acts as a suppressor of hepatic gluconeogenesis and glucose output by repressing PPARGC1A transcriptional activity on gluconeogenic genes via its phosphorylation. Phosphorylates PPP2R5B thereby stimulating the assembly of PP2A phosphatase with the PPP2R5B-AKT1 complex leading to dephosphorylation of AKT1. Phosphorylates: PTPN1, SRSF1 and SRSF3. Regulates the alternative splicing of tissue factor (F3) pre-mRNA in endothelial cells. Phosphorylates PAGE4 at several serine and threonine residues and this phosphorylation attenuates the ability of PAGE4 to potentiate the transcriptional activator activity of JUN. This Homo sapiens (Human) protein is Dual specificity protein kinase CLK2 (CLK2).